The sequence spans 132 residues: Small ribosomal subunit protein uS8 (132 aa).

It belongs to the universal ribosomal protein uS8 family. As to quaternary structure, part of the 30S ribosomal subunit. Contacts proteins S5 and S12.

Functionally, one of the primary rRNA binding proteins, it binds directly to 16S rRNA central domain where it helps coordinate assembly of the platform of the 30S subunit. This Rhodococcus erythropolis (strain PR4 / NBRC 100887) protein is Small ribosomal subunit protein uS8.